We begin with the raw amino-acid sequence, 163 residues long: Nuclear cap-binding protein subunit 2 (163 aa).

MRNA-binding positions include Tyr18, Tyr41, 110-114 (RVDWD), 121-125 (RQYGR), and 131-132 (QV). One can recognise an RRM domain in the interval 38–116 (STLYVGNLSF…RIVRVDWDAG (79 aa)).

It belongs to the RRM NCBP2 family. In terms of assembly, component of the nuclear cap-binding complex (CBC), a heterodimer composed of Cbp80 and Cbp20 that interacts with m7GpppG-capped RNA.

The protein localises to the nucleus. Functionally, component of the cap-binding complex (CBC), which binds co-transcriptionally to the 5' cap of pre-mRNAs and is involved in various processes such as pre-mRNA splicing and RNA-mediated gene silencing (RNAi). The CBC complex is involved in miRNA-mediated RNA interference and is required for primary microRNAs (miRNAs) processing. Also involved in innate immunity via the short interfering RNAs (siRNAs) processing machinery by restricting the viral RNA production. In the CBC complex, Cbp20 recognizes and binds capped RNAs (m7GpppG-capped RNA) but requires Cbp80 to stabilize the movement of its N-terminal loop and lock the CBC into a high affinity cap-binding state with the cap structure. This is Nuclear cap-binding protein subunit 2 (Cbp20) from Anopheles gambiae (African malaria mosquito).